We begin with the raw amino-acid sequence, 125 residues long: Large ribosomal subunit protein bL12 (125 aa).

It belongs to the bacterial ribosomal protein bL12 family. In terms of assembly, homodimer. Part of the ribosomal stalk of the 50S ribosomal subunit. Forms a multimeric L10(L12)X complex, where L10 forms an elongated spine to which 2 to 4 L12 dimers bind in a sequential fashion. Binds GTP-bound translation factors.

Forms part of the ribosomal stalk which helps the ribosome interact with GTP-bound translation factors. Is thus essential for accurate translation. This is Large ribosomal subunit protein bL12 from Gluconacetobacter diazotrophicus (strain ATCC 49037 / DSM 5601 / CCUG 37298 / CIP 103539 / LMG 7603 / PAl5).